A 644-amino-acid chain; its full sequence is Serine/threonine kinase YeaG (644 aa).

The protein belongs to the PrkA family. As to quaternary structure, monomer.

The protein localises to the cytoplasm. The enzyme catalyses L-seryl-[protein] + ATP = O-phospho-L-seryl-[protein] + ADP + H(+). It catalyses the reaction L-threonyl-[protein] + ATP = O-phospho-L-threonyl-[protein] + ADP + H(+). Its function is as follows. Kinase that plays a role in the adaptation to sustained nitrogen starvation. The protein is Serine/threonine kinase YeaG (yeaG) of Escherichia coli O157:H7.